Here is a 1873-residue protein sequence, read N- to C-terminus: Voltage-dependent L-type calcium channel subunit alpha-1S (1873 aa).

The segment at 1-23 is disordered; the sequence is MEPSSPQDEGLRKKQPKKPVPEI. The Cytoplasmic segment spans residues 1-51; sequence MEPSSPQDEGLRKKQPKKPVPEILPRPPRALFCLTLENPLRKACISIVEWK. The I repeat unit spans residues 38 to 337; that stretch reads NPLRKACISI…LVLGVLSGEF (300 aa). A helical transmembrane segment spans residues 52 to 70; the sequence is PFETIILLTIFANCVALAV. The Extracellular segment spans residues 71–85; that stretch reads YLPMPEDDNNSLNLG. Residue Asn-79 is glycosylated (N-linked (GlcNAc...) asparagine). A helical membrane pass occupies residues 86–106; it reads LEKLEYFFLIVFSIEAAMKII. The Cytoplasmic segment spans residues 107-115; it reads AYGFLFHQD. A helical transmembrane segment spans residues 116 to 136; sequence AYLRSGWNVLDFTIVFLGVFT. At 137–160 the chain is on the extracellular side; it reads VILEQVNVIQSHTAPMSSKGAGLD. A helical membrane pass occupies residues 161-179; it reads VKALRAFRVLRPLRLVSGV. Residues 180-196 are Cytoplasmic-facing; sequence PSLQVVLNSIFKAMLPL. A helical transmembrane segment spans residues 197–218; that stretch reads FHIALLVLFMVIIYAIIGLELF. Residues 219–279 are Extracellular-facing; sequence KGKMHKTCYF…HGITHFDNFG (61 aa). Disulfide bonds link Cys-226–Cys-254 and Cys-245–Cys-261. Residue Asn-257 is glycosylated (N-linked (GlcNAc...) asparagine). The segment at residues 280–301 is an intramembrane region (pore-forming); sequence FSMLTVYQCITMEGWTDVLYWV. Positions 290 to 293 match the Selectivity filter of repeat I motif; sequence TMEG. Glu-292 lines the Ca(2+) pocket. Residues 302-309 lie on the Extracellular side of the membrane; it reads NDAIGNEW. A helical transmembrane segment spans residues 310–330; that stretch reads PWIYFVTLILLGSFFILNLVL. The Cytoplasmic segment spans residues 331–432; it reads GVLSGEFTKE…WKCHDIVKSK (102 aa). The interval 357–374 is binding to the beta subunit; it reads QQLDEDLRGYMSWITQGE. Phosphoserine occurs at positions 393 and 397. Residues 418-664 form an II repeat; that stretch reads NRIFRWKCHD…VFLAIAVDNL (247 aa). Residues 433-451 form a helical membrane-spanning segment; it reads VFYWLVILIVALNTLSIAS. Residues 452–462 lie on the Extracellular side of the membrane; that stretch reads EHHNQPLWLTR. A helical membrane pass occupies residues 463 to 483; the sequence is LQDIANRVLLSLFTTEMLMKM. Over 484 to 494 the chain is Cytoplasmic; sequence YGLGLRQYFMS. Residues 495–514 traverse the membrane as a helical segment; it reads IFNRFDCFVVCSGILEILLV. The Extracellular segment spans residues 515–523; the sequence is ESGAMTPLG. A helical transmembrane segment spans residues 524–542; it reads ISVLRCIRLLRIFKITKYW. Residues 543–561 are Cytoplasmic-facing; the sequence is TSLSNLVASLLNSIRSIAS. Residues 562–581 traverse the membrane as a helical segment; sequence LLLLLFLFIVIFALLGMQLF. The Extracellular portion of the chain corresponds to 582 to 601; that stretch reads GGRYDFEDTEVRRSNFDNFP. The segment at residues 602–623 is an intramembrane region (pore-forming); that stretch reads QALISVFQVLTGEDWTSMMYNG. The Selectivity filter of repeat II signature appears at 612 to 615; sequence TGED. Position 614 (Glu-614) interacts with Ca(2+). Over 624-633 the chain is Extracellular; the sequence is IMAYGGPSYP. The chain crosses the membrane as a helical span at residues 634–653; the sequence is GMLVCIYFIILFVCGNYILL. Topologically, residues 654–799 are cytoplasmic; it reads NVFLAIAVDN…VLCHRIVNAT (146 aa). Disordered stretches follow at residues 675-717 and 731-757; these read KAKA…IPTT and EVKD…LSPR. Ser-687 carries the phosphoserine; by PKA modification. The segment covering 690–711 has biased composition (basic and acidic residues); that stretch reads LPDKSEEEKSTMAKKLEQKPKG. Positions 742–751 are enriched in acidic residues; it reads PGDDEEDEPE. Residues 747–760 are interaction with STAC, STAC2 and STAC3 (via SH3 domains); that stretch reads EDEPEIPLSPRPRP. An III repeat occupies 786–1068; the sequence is NKIRVLCHRI…IFVGFVIVTF (283 aa). A helical membrane pass occupies residues 800 to 818; the sequence is WFTNFILLFILLSSAALAA. The Extracellular portion of the chain corresponds to 819 to 830; the sequence is EDPIRADSMRNQ. The helical transmembrane segment at 831 to 850 threads the bilayer; that stretch reads ILKHFDIGFTSVFTVEIVLK. At 851–866 the chain is on the cytoplasmic side; sequence MTTYGAFLHKGSFCRN. Residues 867–885 form a helical membrane-spanning segment; that stretch reads YFNMLDLLVVAVSLISMGL. Topologically, residues 886-892 are extracellular; the sequence is ESSAISV. The chain crosses the membrane as a helical span at residues 893–911; it reads VKILRVLRVLRPLRAINRA. The Cytoplasmic portion of the chain corresponds to 912–930; that stretch reads KGLKHVVQCMFVAISTIGN. A helical transmembrane segment spans residues 931-950; that stretch reads IVLVTTLLQFMFACIGVQLF. Over 951 to 1000 the chain is Extracellular; that stretch reads KGKFFRCTDLSKMTEEECRGYYYVYKDGDPMQIELRHREWVHSDFHFDNV. Residues Cys-957 and Cys-968 are joined by a disulfide bond. Residues 988–1077 form a dihydropyridine binding region; it reads REWVHSDFHF…FQEQGETEYK (90 aa). The pore-forming intramembrane region spans 1001–1021; it reads LSAMMSLFTVSTFEGWPQLLY. The Selectivity filter of repeat III signature appears at 1012-1015; that stretch reads TFEG. Glu-1014 is a binding site for Ca(2+). The Extracellular segment spans residues 1022–1038; it reads KAIDSNAEDVGPIYNNR. Residues 1039–1060 traverse the membrane as a helical segment; sequence VEMAIFFIIYIILIAFFMMNIF. At 1061-1118 the chain is on the cytoplasmic side; that stretch reads VGFVIVTFQEQGETEYKNCELDKNQRQCVQYALKARPLRCYIPKNPYQYQVWYIVTSS. The stretch at 1105–1384 is one IV repeat; that stretch reads NPYQYQVWYI…LFVAVIMDNF (280 aa). A helical transmembrane segment spans residues 1119 to 1140; it reads YFEYLMFALIMLNTICLGMQHY. Residue Asn-1141 is glycosylated (N-linked (GlcNAc...) asparagine). Residues 1141–1148 lie on the Extracellular side of the membrane; sequence NQSEQMNH. The chain crosses the membrane as a helical span at residues 1149–1170; it reads ISDILNVAFTIIFTLEMILKLM. At 1171–1180 the chain is on the cytoplasmic side; that stretch reads AFKARGYFGD. A helical transmembrane segment spans residues 1181–1200; it reads PWNVFDFLIVIGSIIDVILS. Residues 1201–1231 lie on the Extracellular side of the membrane; sequence EIDTFLASSGGLYCLGGGCGNVDPDESARIS. A helical transmembrane segment spans residues 1232 to 1250; that stretch reads SAFFRLFRVMRLIKLLSRA. Residues 1251–1268 are Cytoplasmic-facing; the sequence is EGVRTLLWTFIKSFQALP. The chain crosses the membrane as a helical span at residues 1269-1289; it reads YVALLIVMLFFIYAVIGMQMF. The Extracellular portion of the chain corresponds to 1290-1311; sequence GKIALVDGTQINRNNNFQTFPQ. Residues 1312 to 1330 constitute an intramembrane region (pore-forming); that stretch reads AVLLLFRCATGEAWQEILL. Residues 1321–1324 carry the Selectivity filter of repeat IV motif; sequence TGEA. At 1331-1356 the chain is on the extracellular side; the sequence is ACSYGKLCDPESDYAPGEEYTCGTNF. Residues 1337–1403 form a dihydropyridine binding region; sequence LCDPESDYAP…LGPHHLDEFK (67 aa). The cysteines at positions 1338 and 1352 are disulfide-linked. The phenylalkylamine binding stretch occupies residues 1349 to 1391; sequence EYTCGTNFAYYYFISFYMLCAFLVINLFVAVIMDNFDYLTRDW. The helical transmembrane segment at 1357–1381 threads the bilayer; that stretch reads AYYYFISFYMLCAFLVINLFVAVIM. Residues 1382–1873 lie on the Cytoplasmic side of the membrane; sequence DNFDYLTRDW…SQETLIPPRL (492 aa). The segment at 1522–1542 is interaction with calmodulin; sequence KFYATFLIQEHFRKFMKRQEE. At Ser-1575 the chain carries Phosphoserine; by PKA and CAMK2. Residue Ser-1617 is modified to Phosphoserine; by PKA. The segment at 1731–1780 is disordered; that stretch reads MPRGQAPPAPCQCPRVESSMPEDRKSSTPGSLHEETPHSRSTRENTSRCS. The span at 1751-1776 shows a compositional bias: basic and acidic residues; the sequence is PEDRKSSTPGSLHEETPHSRSTRENT.

Belongs to the calcium channel alpha-1 subunit (TC 1.A.1.11) family. CACNA1S subfamily. As to quaternary structure, component of a calcium channel complex consisting of a pore-forming alpha subunit (CACNA1S) and the ancillary subunits CACNB1 or CACNB2, CACNG1 and CACNA2D1. The channel complex contains alpha, beta, gamma and delta subunits in a 1:1:1:1 ratio, i.e. it contains either CACNB1 or CACNB2. CACNA1S channel activity is modulated by the auxiliary subunits (CACNB1 or CACNB2, CACNG1 and CACNA2D1). Interacts with DYSF and JSRP1. Interacts with RYR1. Interacts with STAC, STAC2 and STAC3 (via their SH3 domains). Interacts with CALM. The alpha-1S subunit is found in two isoforms in the skeletal muscle: a minor form of 212 kDa containing the complete amino acid sequence, and a major form of 190 kDa derived from the full-length form by post-translational proteolysis close to Phe-1690. Post-translationally, phosphorylated. Phosphorylation by PKA activates the calcium channel. Both the minor and major forms are phosphorylated in vitro by PKA. Phosphorylation at Ser-1575 is involved in beta-adrenergic-mediated regulation of the channel. As to expression, skeletal muscle specific.

The protein resides in the cell membrane. Its subcellular location is the sarcolemma. The protein localises to the T-tubule. The enzyme catalyses Ca(2+)(in) = Ca(2+)(out). Channel activity is blocked by dihydropyridines (DHP), phenylalkylamines, and by benzothiazepines. Its function is as follows. Pore-forming, alpha-1S subunit of the voltage-gated calcium channel that gives rise to L-type calcium currents in skeletal muscle. Calcium channels containing the alpha-1S subunit play an important role in excitation-contraction coupling in skeletal muscle via their interaction with RYR1, which triggers Ca(2+) release from the sarcoplasmic reticulum and ultimately results in muscle contraction. Long-lasting (L-type) calcium channels belong to the 'high-voltage activated' (HVA) group. The sequence is that of Voltage-dependent L-type calcium channel subunit alpha-1S (CACNA1S) from Homo sapiens (Human).